A 660-amino-acid chain; its full sequence is Zeaxanthin epoxidase, chloroplastic (660 aa).

The transit peptide at 1 to 49 directs the protein to the chloroplast; it reads MYASSARDGIPGKWCNARRKQLPLLISKDFPAELYHSLPCKSLENGHIK. FAD contacts are provided by residues 79–107 and 357–370; these read KVLV…LVFE and TFSW…LLGD. Positions 545–609 constitute an FHA domain; it reads LVLSRDENMP…HGTWFIDNEG (65 aa).

Requires FAD as cofactor.

It is found in the plastid. It localises to the chloroplast membrane. The protein resides in the chloroplast thylakoid membrane. It catalyses the reaction all-trans-zeaxanthin + 4 reduced [2Fe-2S]-[ferredoxin] + 2 O2 + 4 H(+) = all-trans-violaxanthin + 4 oxidized [2Fe-2S]-[ferredoxin] + 2 H2O. The catalysed reaction is all-trans-zeaxanthin + 2 reduced [2Fe-2S]-[ferredoxin] + O2 + 2 H(+) = all-trans-antheraxanthin + 2 oxidized [2Fe-2S]-[ferredoxin] + H2O. It carries out the reaction all-trans-antheraxanthin + 2 reduced [2Fe-2S]-[ferredoxin] + O2 + 2 H(+) = all-trans-violaxanthin + 2 oxidized [2Fe-2S]-[ferredoxin] + H2O. The enzyme catalyses beta-cryptoxanthin + 2 reduced [2Fe-2S]-[ferredoxin] + O2 + 2 H(+) = (5R,6S)-5,6-epoxi-beta-cryptoxanthin + 2 oxidized [2Fe-2S]-[ferredoxin] + H2O. It functions in the pathway plant hormone biosynthesis; abscisate biosynthesis. In terms of biological role, converts zeaxanthin into antheraxanthin and subsequently violaxanthin. Also acts on beta-cryptoxanthin. Involved in the epoxidation of zeaxanthin. The polypeptide is Zeaxanthin epoxidase, chloroplastic (Capsicum annuum (Capsicum pepper)).